The chain runs to 327 residues: Annexin A8 (327 aa).

Annexin repeat units lie at residues 21–92 (FNPD…ALMY), 93–164 (PPYS…CLLQ), 177–249 (GLVL…TVVK), and 253–324 (NVHS…NLVG). 4 residues coordinate Ca(2+): methionine 266, glycine 268, glycine 270, and aspartate 310.

Belongs to the annexin family.

Its function is as follows. This protein is an anticoagulant protein that acts as an indirect inhibitor of the thromboplastin-specific complex, which is involved in the blood coagulation cascade. This is Annexin A8 (Anxa8) from Mus musculus (Mouse).